Here is a 239-residue protein sequence, read N- to C-terminus: Type III effector protein HopBA1 (239 aa).

Over residues 1-20 the composition is skewed to low complexity; the sequence is MLNRISSSSPTSYVSSGSSS. The disordered stretch occupies residues 1-31; it reads MLNRISSSSPTSYVSSGSSSAGINPSINVRP.

The protein localises to the secreted. It localises to the host cell. Virulence factor recognized by the A.thaliana disease resistance protein RBA1, which triggers plant cell death. HopBA1 enhances RBA1 self-association, which is necessary for ectopic autoactivation of host cell death. The sequence is that of Type III effector protein HopBA1 from Pseudomonas syringae pv. aptata.